We begin with the raw amino-acid sequence, 323 residues long: Thioredoxin reductase (323 aa).

Position 42–49 (42–49 (YRAEADGA)) interacts with FAD. A disulfide bridge links Cys143 with Cys146. 286 to 295 (DVLCNEVKQA) contacts FAD.

This sequence belongs to the class-II pyridine nucleotide-disulfide oxidoreductase family. In terms of assembly, homodimer. FAD is required as a cofactor.

Its subcellular location is the cytoplasm. The enzyme catalyses [thioredoxin]-dithiol + NADP(+) = [thioredoxin]-disulfide + NADPH + H(+). The sequence is that of Thioredoxin reductase (trxB) from Aquifex aeolicus (strain VF5).